Consider the following 256-residue polypeptide: MIDVQSQKDQRGISIQKVGIKDLNWPIVVMDRENKTQTTIAKIIAAAELKGDIRGTHMSRFIEAIDELKVVGPKEIEKLLDRIKEKLNSEKAYIRFDFPYFINKRTPVTATLSPLKVDCYFEAEKDQKFDLKVGVIVPVHTLCPCSKEISEYGAHNQRAYVTIEVRMKKFMWIEELVEIAEASASCPLYSILKRPDEKWVTERAYQNPRFVEDLLREVVLKMKEDGRIKWYKVFVESIESIHNHNAFAYIEGEITK.

Belongs to the GTP cyclohydrolase IV family.

It carries out the reaction GTP + H2O = 7,8-dihydroneopterin 3'-triphosphate + formate + H(+). Its pathway is cofactor biosynthesis; 7,8-dihydroneopterin triphosphate biosynthesis; 7,8-dihydroneopterin triphosphate from GTP: step 1/1. Converts GTP to 7,8-dihydroneopterin triphosphate. This is GTP cyclohydrolase FolE2 from Caldicellulosiruptor bescii (strain ATCC BAA-1888 / DSM 6725 / KCTC 15123 / Z-1320) (Anaerocellum thermophilum).